Here is a 145-residue protein sequence, read N- to C-terminus: D-aminoacyl-tRNA deacylase (145 aa).

Residues Gly-137–Pro-138 carry the Gly-cisPro motif, important for rejection of L-amino acids motif.

This sequence belongs to the DTD family. As to quaternary structure, homodimer.

Its subcellular location is the cytoplasm. The catalysed reaction is glycyl-tRNA(Ala) + H2O = tRNA(Ala) + glycine + H(+). The enzyme catalyses a D-aminoacyl-tRNA + H2O = a tRNA + a D-alpha-amino acid + H(+). In terms of biological role, an aminoacyl-tRNA editing enzyme that deacylates mischarged D-aminoacyl-tRNAs. Also deacylates mischarged glycyl-tRNA(Ala), protecting cells against glycine mischarging by AlaRS. Acts via tRNA-based rather than protein-based catalysis; rejects L-amino acids rather than detecting D-amino acids in the active site. By recycling D-aminoacyl-tRNA to D-amino acids and free tRNA molecules, this enzyme counteracts the toxicity associated with the formation of D-aminoacyl-tRNA entities in vivo and helps enforce protein L-homochirality. This is D-aminoacyl-tRNA deacylase from Rhodococcus opacus (strain B4).